The chain runs to 212 residues: Regulatory protein RecX (212 aa).

Belongs to the RecX family.

It localises to the cytoplasm. Its function is as follows. Modulates RecA activity. In Clostridioides difficile (strain 630) (Peptoclostridium difficile), this protein is Regulatory protein RecX.